The primary structure comprises 962 residues: Synphilin-1 (962 aa).

3 disordered regions span residues 80–99 (SPLKHQPETLENNENEDQKN), 104–137 (YQKGGETDQGPQPEELSPEDGVGGLPGKGSEPSQ), and 222–249 (TALRDQHKLSTEDSESSPALGKCGPAYE). 4 ANK repeats span residues 348 to 379 (NGNNLLHIAASKGHAECLQHLTSLMGEDCLNE), 383 to 412 (EQLTPAGLAIKNGQLECVRWMVSETEAIAE), 418 to 447 (DFPSLIHYAGCYGQEKILLWLLQFMQEQGI), and 455 to 484 (EGNSAVHVASQHGYLGCIQTLVEYGANVTM). Residues 522-548 (VKLTKQLKEQTVERVTLQSQLQQLLEA) adopt a coiled-coil conformation. A disordered region spans residues 548–590 (AQKSEGKSLPSSPSSPSSPASTKSQWKALDTDEESTGKSKVGA). Over residues 554 to 571 (KSLPSSPSSPSSPASTKS) the composition is skewed to low complexity. One copy of the ANK 5 repeat lies at 602–631 (VSSRARTKGKDEDSDKILRQLLGKEISENV). Positions 667–684 (RQLMQRSLSESDTDSNNS) are enriched in low complexity. The interval 667–852 (RQLMQRSLSE…QRTSESGEQM (186 aa)) is disordered. The segment covering 685 to 699 (EDPKNTPVKRADRPR) has biased composition (basic and acidic residues). One copy of the ANK 6 repeat lies at 698–728 (PRPQPIVESVENVDSAESLHLMIKKHSLASG). The span at 772–790 (PSTEATQSSPDSTAAQKVA) shows a compositional bias: polar residues. Basic and acidic residues predominate over residues 831-840 (NGEKDKDKGR).

As to quaternary structure, associates with SNCA, RNF19A and PRKN. In terms of processing, ubiquitinated; mediated by SIAH1 or RNF19A and leading to its subsequent proteasomal degradation.

In Mus musculus (Mouse), this protein is Synphilin-1 (Sncaip).